The sequence spans 346 residues: Holliday junction branch migration complex subunit RuvB (346 aa).

The segment at 1-182 (MTRVISGEPQ…FGIPIRLEFY (182 aa)) is large ATPase domain (RuvB-L). The ATP site is built by Leu21, Arg22, Gly63, Lys66, Thr67, Thr68, Arg172, Tyr182, and Arg219. Position 67 (Thr67) interacts with Mg(2+). The interval 183–253 (TPAELRHVLQ…AAAMALARLE (71 aa)) is small ATPAse domain (RuvB-S). Residues 256-346 (ESGLDSLDRR…QAQGALFDEG (91 aa)) form a head domain (RuvB-H) region. Arg292, Arg311, and Arg316 together coordinate DNA.

Belongs to the RuvB family. As to quaternary structure, homohexamer. Forms an RuvA(8)-RuvB(12)-Holliday junction (HJ) complex. HJ DNA is sandwiched between 2 RuvA tetramers; dsDNA enters through RuvA and exits via RuvB. An RuvB hexamer assembles on each DNA strand where it exits the tetramer. Each RuvB hexamer is contacted by two RuvA subunits (via domain III) on 2 adjacent RuvB subunits; this complex drives branch migration. In the full resolvosome a probable DNA-RuvA(4)-RuvB(12)-RuvC(2) complex forms which resolves the HJ.

It localises to the cytoplasm. It catalyses the reaction ATP + H2O = ADP + phosphate + H(+). The RuvA-RuvB-RuvC complex processes Holliday junction (HJ) DNA during genetic recombination and DNA repair, while the RuvA-RuvB complex plays an important role in the rescue of blocked DNA replication forks via replication fork reversal (RFR). RuvA specifically binds to HJ cruciform DNA, conferring on it an open structure. The RuvB hexamer acts as an ATP-dependent pump, pulling dsDNA into and through the RuvAB complex. RuvB forms 2 homohexamers on either side of HJ DNA bound by 1 or 2 RuvA tetramers; 4 subunits per hexamer contact DNA at a time. Coordinated motions by a converter formed by DNA-disengaged RuvB subunits stimulates ATP hydrolysis and nucleotide exchange. Immobilization of the converter enables RuvB to convert the ATP-contained energy into a lever motion, pulling 2 nucleotides of DNA out of the RuvA tetramer per ATP hydrolyzed, thus driving DNA branch migration. The RuvB motors rotate together with the DNA substrate, which together with the progressing nucleotide cycle form the mechanistic basis for DNA recombination by continuous HJ branch migration. Branch migration allows RuvC to scan DNA until it finds its consensus sequence, where it cleaves and resolves cruciform DNA. This is Holliday junction branch migration complex subunit RuvB from Caulobacter vibrioides (strain ATCC 19089 / CIP 103742 / CB 15) (Caulobacter crescentus).